The sequence spans 319 residues: MAAAAASNGSGMEVDVAAFPTVMAQGVTGSVTVALHPLVILNISDHWIRMRSQEGRPVQVIGALIGKQEGRNIEVMNSFELLSQINEEKITINKEYYYTKEEQFKQVFKDMEFLGWYTTGGTPDPSDIHVHKQVCEIIESPLFLKLNPMTKHTDLPVSVYESVIDIVNGEATMLLAELSYTLATEEAERIGVDHVARMTATGSGENSTVAEHLIAQHSAIKMLHSRVRLILEYVRAAEAGEVPFNHEILREASALCHCLPVLSTDKFKMDFYDQCNDVGLMSYLGTITKTCNTMNQFVNKFNILYDRQGIGRRMRGLFF.

An MPN domain is found at 33-166; that stretch reads VALHPLVILN…VSVYESVIDI (134 aa).

The protein belongs to the peptidase M67A family. CSN6 subfamily. As to quaternary structure, component of the CSN complex, probably composed of cops1, cops2, cops3, cops4, cops5, cops6, cops7, cops8 and cops9.

It localises to the cytoplasm. The protein localises to the nucleus. Component of the COP9 signalosome complex (CSN), a complex involved in various cellular and developmental processes. The CSN complex is an essential regulator of the ubiquitin (Ubl) conjugation pathway by mediating the deneddylation of the cullin subunits of E3 ligase complexes, leading to modify the Ubl ligase activity. The polypeptide is COP9 signalosome complex subunit 6 (cops6) (Xenopus tropicalis (Western clawed frog)).